A 233-amino-acid polypeptide reads, in one-letter code: Protein lin-7 homolog A (233 aa).

The short motif at 14–28 is the Kinase interacting site element; the sequence is MATLTVVQPLTLDRD. An L27 domain is found at 25-80; that stretch reads LDRDVARAIELLEKLQESGEVPVHKLQSLKKVLQSEFCTAIREVYQYMHETITVNG. The PDZ domain occupies 108–190; it reads VVELPKTDEG…SVKLVVRYTP (83 aa). Residues 214-233 are disordered; sequence LLIQQQQQQQQQQPQQNHMS.

Belongs to the lin-7 family. In terms of assembly, forms a complex with CASK and CASKIN1. Component of the brain-specific heterotrimeric complex (LIN-10-LIN-2-LIN-7 complex) composed of at least APBA1, CASK, and LIN7, which associates with the motor protein KIF17 to transport vesicles along microtubules. Can also interact with other modular proteins containing protein-protein interaction domains like PALS1, PALS2, MPP7, DLG1, DLG2 and DLG3 through its L27 domain. Interacts with DLG4, GRIN2B and MARCHF11 as well as CDH1 and CTNNB1, the channels KCNJ12/Kir2.2, KCNJ4/Kir2.3 and probably KCNJ2/Kir2.1 and SLC6A12/BGT-1 via its PDZ domain. The association of LIN7A with cadherin and beta-catenin is calcium-dependent, occurs at synaptic junctions and requires the actin cytoskeleton. Interacts with EGFR, ERBB2, ERBB3 and ERBB4 with both PDZ and KID domains. Associates with KIF17 via APBA1. Interacts with HTR4. Forms a tripartite complex composed of DLG1, MPP7 and LIN7 (LIN7A or LIN7C). Expressed in the kidney, along the length of the nephron.

It localises to the cell membrane. Its subcellular location is the basolateral cell membrane. It is found in the cell junction. The protein resides in the postsynaptic density membrane. The protein localises to the tight junction. Functionally, plays a role in establishing and maintaining the asymmetric distribution of channels and receptors at the plasma membrane of polarized cells. Forms membrane-associated multiprotein complexes that may regulate delivery and recycling of proteins to the correct membrane domains. The tripartite complex composed of LIN7 (LIN7A, LIN7B or LIN7C), CASK and APBA1 associates with the motor protein KIF17 to transport vesicles containing N-methyl-D-aspartate (NMDA) receptor subunit NR2B along microtubules. This complex may have the potential to couple synaptic vesicle exocytosis to cell adhesion in brain. Ensures the proper localization of GRIN2B (subunit 2B of the NMDA receptor) to neuronal postsynaptic density and may function in localizing synaptic vesicles at synapses where it is recruited by beta-catenin and cadherin. Required to localize Kir2 channels, GABA transporter (SLC6A12) and EGFR/ERBB1, ERBB2, ERBB3 and ERBB4 to the basolateral membrane of epithelial cells. In Mus musculus (Mouse), this protein is Protein lin-7 homolog A (Lin7a).